The following is a 58-amino-acid chain: Large ribosomal subunit protein bL32c (58 aa).

The protein belongs to the bacterial ribosomal protein bL32 family.

Its subcellular location is the plastid. The protein resides in the chloroplast. This chain is Large ribosomal subunit protein bL32c (rpl32), found in Adiantum capillus-veneris (Maidenhair fern).